We begin with the raw amino-acid sequence, 63 residues long: Cecropin-A (63 aa).

The signal sequence occupies residues 1–22; it reads MNFVRILSFVFALVLALGAVSA. The propeptide occupies 23–26; it reads APEP. Leucine amide is present on leucine 61.

It belongs to the cecropin family. Highest expression in fat body and hemocytes. Is also expressed in Malpighian tubules and to a much lesser extent in midgut. Not present in silk gland.

The protein localises to the secreted. Cecropins have lytic and antibacterial activity against several Gram-positive and Gram-negative bacteria. This is Cecropin-A (CECA) from Bombyx mori (Silk moth).